The sequence spans 1335 residues: MESEMLQSPLLGLGEEDEADLTDWNLPLAFMKKRHCEKIEGSKSLAQSWRMKDRMKTVSVALVLCLNVGVDPPDVVKTTPCARLECWIDPLSMGPQKALETIGANLQKQYENWQPRARYKQSLDPTVDEVKKLCTSLRRNAKEERVLFHYNGHGVPRPTVNGEVWVFNKNYTQYIPLSIYDLQTWMGSPSIFVYDCSNAGLIVKSFKQFALQREQELEVAAINPNHPLAQMPLPPSMKNCIQLAACEATELLPMIPDLPADLFTSCLTTPIKIALRWFCMQKCVSLVPGVTLDLIEKIPGRLNDRRTPLGELNWIFTAITDTIAWNVLPRDLFQKLFRQDLLVASLFRNFLLAERIMRSYNCTPVSSPRLPPTYMHAMWQAWDLAVDICLSQLPTIIEEGTAFRHSPFFAEQLTAFQVWLTMGVENRNPPEQLPIVLQVLLSQVHRLRALDLLGRFLDLGPWAVSLALSVGIFPYVLKLLQSSARELRPLLVFIWAKILAVDSSCQADLVKDNGHKYFLSVLADPYMPAEHRTMTAFILAVIVNSYHTGQEACLQGNLIAICLEQLNDPHPLLRQWVAICLGRIWQNFDSARWCGVRDSAHEKLYSLLSDPIPEVRCAAVFALGTFVGNSAERTDHSTTIDHNVAMMLAQLVSDGSPMVRKELVVALSHLVVQYESNFCTVALQFIEEEKNYALPSPATTEGGSLTPVRDSPCTPRLRSVSSYGNIRAVATARSLNKSLQNLSLTEESGGAVAFSPGNLSTSSSASSTLGSPENEEHILSFETIDKMRRASSYSSLNSLIGVSFNSVYTQIWRVLLHLAADPYPEVSDVAMKVLNSIAYKATVNARPQRVLDTSSLTQSAPASPTNKGVHIHQAGGSPPASSTSSSSLTNDVAKQPVSRDLPSGRPGTTGPAGAQYTPHSHQFPRTRKMFDKGPEQTADDADDAAGHKSFISATVQTGFCDWSARYFAQPVMKIPEEHDLESQIRKEREWRFLRNSRVRRQAQQVIQKGITRLDDQIFLNRNPGVPSVVKFHPFTPCIAVADKDSICFWDWEKGEKLDYFHNGNPRYTRVTAMEYLNGQDCSLLLTATDDGAIRVWKNFADLEKNPEMVTAWQGLSDMLPTTRGAGMVVDWEQETGLLMSSGDVRIVRIWDTDREMKVQDIPTGADSCVTSLSCDSHRSLIVAGLGDGSIRVYDRRMALSECRVMTYREHTAWVVKASLQKRPDGHIVSVSVNGDVRIFDPRMPESVNVLQIVKGLTALDIHPQADLIACGSVNQFTAIYNSSGELINNIKYYDGFMGQRVGAISCLAFHPHWPHLAVGSNDYYISVYSVEKRVR.

A phosphoserine mark is found at serine 44 and serine 122. Serine 696 carries the post-translational modification Phosphoserine; by MAPK8. The O-linked (GlcNAc) threonine glycan is linked to threonine 700. Phosphothreonine; by MAPK8 is present on threonine 706. Residues serine 719 and serine 721 each carry the phosphoserine; by RPS6KA1 modification. Residue serine 722 is modified to Phosphoserine; by AMPK and RPS6KA1. Serine 738 bears the Phosphoserine mark. Position 791 is a phosphoserine; by PKA (serine 791). Serine 792 carries the phosphoserine; by AMPK modification. 2 positions are modified to phosphoserine: serine 836 and serine 855. The tract at residues 850 to 943 is disordered; it reads VLDTSSLTQS…PEQTADDADD (94 aa). Residues 851-866 are compositionally biased toward polar residues; sequence LDTSSLTQSAPASPTN. Residue serine 859 is modified to Phosphoserine; by MTOR. The residue at position 863 (serine 863) is a Phosphoserine; by MAPK8, MTOR and NLK. Threonine 865 carries the phosphothreonine modification. Over residues 874 to 887 the composition is skewed to low complexity; the sequence is AGGSPPASSTSSSS. At serine 877 the chain carries Phosphoserine; by TBK1. Glycyl lysine isopeptide (Lys-Gly) (interchain with G-Cter in ubiquitin) cross-links involve residues lysine 932 and lysine 948. Residue serine 982 is modified to Phosphoserine. 7 WD repeats span residues 1020 to 1061, 1065 to 1106, 1121 to 1160, 1164 to 1203, 1209 to 1249, 1251 to 1291, and 1299 to 1335; these read NRNP…DYFH, PRYT…EKNP, TTRG…KVQD, GADS…SECR, EHTA…SVNV, QIVK…NNIK, and QRVG…KRVR. Residue lysine 1097 is modified to N6-acetyllysine.

This sequence belongs to the WD repeat RAPTOR family. In terms of assembly, part of the mechanistic target of rapamycin complex 1 (mTORC1) which contains MTOR, MLST8 and RPTOR. mTORC1 associates with AKT1S1/PRAS40, which inhibits its activity. mTORC1 associates with DEPTOR, which regulates its activity. mTORC1 binds to and is inhibited by FKBP12-rapamycin. Forms a complex with MTOR under both leucine-rich and -poor conditions. Interacts with (via TOS motifs) EIF4EBP1 and RPS6KB1; interaction is independent of its association with MTOR. Binds preferentially to poorly or non-phosphorylated forms of EIF4EBP1, and this binding is critical to the ability of MTOR to catalyze phosphorylation. Interacts with ULK1 in a nutrient-dependent manner; the interaction is reduced during starvation. Interacts with GTP-bound form of RagA/RRAGA or RagB/RRAGB and GDP-bound form of RagC/RRAGC or RagD/RRAGD, promoting recruitment of mTORC1 to the lysosomes. Interacts (when phosphorylated by AMPK) with 14-3-3 protein, leading to inhibition of its activity. Interacts with SPAG5; SPAG5 competes with MTOR for RPTOR-binding, resulting in decreased mTORC1 formation. Interacts with WAC; WAC positively regulates MTOR activity by promoting the assembly of the TTT complex composed of TELO2, TTI1 and TTI2 and the RUVBL complex composed of RUVBL1 and RUVBL2 into the TTT-RUVBL complex which leads to the dimerization of the mTORC1 complex and its subsequent activation. Interacts with G3BP1. The complex formed with G3BP1 and SPAG5 is increased by oxidative stress. Interacts with HTR6. Interacts with PIH1D1. Interacts with LARP1. Interacts with BRAT1. Interacts with SIK3. Interacts with SLC38A7; this interaction mediates the recruitment of mTORC1 to the lysosome and its subsequent activation. (Microbial infection) Interacts with vaccinia virus protein F17; this interaction dysregulates mTOR. Insulin-stimulated phosphorylation at Ser-863 by MTOR and MAPK8 regulates mTORC1 activity. Phosphorylated at Ser-863 by NLK in response to stress, disrupting the interaction with small GTPases Rag (RagA/RRAGA, RagB/RRAGB, RagC/RRAGC and/or RagD/RRAGD), thereby preventing lysosome recruitment and activation of the mTORC1 complex. Osmotic stress also induces phosphorylation at Ser-696, Thr-706 and Ser-863 by MAPK8. Ser-863 phosphorylation is required for phosphorylation at Ser-855 and Ser-859. In response to nutrient limitation, phosphorylated at Ser-722 and Ser-792 by AMPK; phosphorylation promotes interaction with 14-3-3 proteins, leading to negative regulation of the mTORC1 complex. Phosphorylation at Ser-722 and Ser-792 by AMPK in response to glucose starvation inhibits O-GlcNAcylation by OGT and subsequent activation of mTORC1. In response to growth factors, phosphorylated at Ser-719, Ser-721 and Ser-722 by RPS6KA1, which stimulates mTORC1 activity. Phosphorylation at Ser-791 by PKA downstream of cAMP inhibits the mTORC1 complex. Phosphorylated at Ser-877 by TBK1, leading to negative regulation of the mTORC1 complex. In terms of processing, O-GlcNAcylated by OGT upon glucose sufficiency, promoting interaction with small GTPases Rag (RagA/RRAGA, RagB/RRAGB, RagC/RRAGC and/or RagD/RRAGD) and subsequent recruitment of mTORC1 to lysosomal membranes, leading to activation of the mTORC1 complex. Phosphorylation at Ser-722 and Ser-792 by AMPK in response to glucose starvation inhibits O-GlcNAcylation. Post-translationally, acetylation at Lys-1097 by EP300/p300 in response to leucine metabolite acetyl-coA promotes its activity, leading to activation of the mTORC1 complex. Acetylation is decreased in response to fasting. Ubiquitinated, leading to its degradation by the proteasome. Deubiquitinated by OTUB1 via a non-catalytic mechanism. Ubiquitinated by an E3 ubiquitin ligase complex containing VHL. Highly expressed in skeletal muscle, and in a lesser extent in brain, lung, small intestine, kidney and placenta. As to expression, widely expressed, with highest levels in nasal mucosa and pituitary and lowest in spleen.

The protein localises to the lysosome membrane. Its subcellular location is the cytoplasm. It localises to the cytoplasmic granule. In terms of biological role, component of the mechanistic target of rapamycin complex 1 (mTORC1), an evolutionarily conserved central nutrient sensor that stimulates anabolic reactions and macromolecule biosynthesis to promote cellular biomass generation and growth. In response to nutrients, growth factors or amino acids, mTORC1 is recruited to the lysosome membrane and promotes protein, lipid and nucleotide synthesis by phosphorylating several substrates, such as ribosomal protein S6 kinase (RPS6KB1 and RPS6KB2) and EIF4EBP1 (4E-BP1). In the same time, it inhibits catabolic pathways by phosphorylating the autophagy initiation components ULK1 and ATG13, as well as transcription factor TFEB, a master regulators of lysosomal biogenesis and autophagy. The mTORC1 complex is inhibited in response to starvation and amino acid depletion. Within the mTORC1 complex, RPTOR acts both as a molecular adapter, which (1) mediates recruitment of mTORC1 to lysosomal membranes via interaction with small GTPases Rag (RagA/RRAGA, RagB/RRAGB, RagC/RRAGC and/or RagD/RRAGD), and a (2) substrate-specific adapter, which promotes substrate specificity by binding to TOS motif-containing proteins and direct them towards the active site of the MTOR kinase domain for phosphorylation. mTORC1 complex regulates many cellular processes, such as odontoblast and osteoclast differentiation or neuronal transmission. mTORC1 complex in excitatory neuronal transmission is required for the prosocial behavior induced by the psychoactive substance lysergic acid diethylamide (LSD). The chain is Regulatory-associated protein of mTOR from Homo sapiens (Human).